We begin with the raw amino-acid sequence, 134 residues long: Ribosome-binding factor A (134 aa).

This sequence belongs to the RbfA family. In terms of assembly, monomer. Binds 30S ribosomal subunits, but not 50S ribosomal subunits or 70S ribosomes.

It is found in the cytoplasm. Functionally, one of several proteins that assist in the late maturation steps of the functional core of the 30S ribosomal subunit. Associates with free 30S ribosomal subunits (but not with 30S subunits that are part of 70S ribosomes or polysomes). Required for efficient processing of 16S rRNA. May interact with the 5'-terminal helix region of 16S rRNA. In Parasynechococcus marenigrum (strain WH8102), this protein is Ribosome-binding factor A.